A 326-amino-acid chain; its full sequence is Fos-related antigen 2 (326 aa).

Residue Met-1 is modified to N-acetylmethionine. A disordered region spans residues 1–39; sequence MYQDYPGNFDTSSRGSSGSPAHAESYSSGGGGQQKFRVD. Residues 9–19 show a composition bias toward polar residues; that stretch reads FDTSSRGSSGS. Residue Lys-35 forms a Glycyl lysine isopeptide (Lys-Gly) (interchain with G-Cter in SUMO2) linkage. At Lys-104 the chain carries N6-acetyllysine; alternate. Residue Lys-104 forms a Glycyl lysine isopeptide (Lys-Gly) (interchain with G-Cter in SUMO2); alternate linkage. Disordered regions lie at residues 111–131, 193–244, and 289–326; these read GRRR…RIRR, ISPE…QRSV, and EQES…LLAL. Ser-120 is modified (phosphoserine). The 64-residue stretch at 124–187 folds into the bZIP domain; sequence EEKRRIRRER…EKLEFMLVAH (64 aa). The interval 126–128 is basic motif; the sequence is KRR. The leucine-zipper stretch occupies residues 129 to 136; sequence IRRERNKL. At Ser-200 the chain carries Phosphoserine. A compositionally biased stretch (polar residues) spans 201–211; sequence PPTSGLQSLRG. Lys-222 participates in a covalent cross-link: Glycyl lysine isopeptide (Lys-Gly) (interchain with G-Cter in SUMO2); alternate. Lys-222 participates in a covalent cross-link: Glycyl lysine isopeptide (Lys-Gly) (interchain with G-Cter in SUMO1); alternate. At Ser-230 the chain carries Phosphoserine. Lys-239 is covalently cross-linked (Glycyl lysine isopeptide (Lys-Gly) (interchain with G-Cter in SUMO2)). Residues Ser-308 and Ser-320 each carry the phosphoserine modification. Over residues 308–320 the composition is skewed to low complexity; that stretch reads SSSGDQSSDSLNS.

This sequence belongs to the bZIP family. Fos subfamily. As to quaternary structure, heterodimer. Interacts with the BAF multiprotein chromatin-remodeling complex subunits SMARCB1 and SMARCD1. Interacts with ARID1A and JUN. Expressed in the brain cortex. Expressed at night in pineal gland (at protein level). Also expressed in osteoblasts (at protein level).

Its subcellular location is the nucleus. Its function is as follows. Controls osteoclast survival and size. As a dimer with JUN, activates LIF transcription. Activates CEBPB transcription in PGE2-activated osteoblasts. The chain is Fos-related antigen 2 (Fosl2) from Rattus norvegicus (Rat).